A 1249-amino-acid chain; its full sequence is Myosin-1 (1249 aa).

Residues 1 to 42 (MGHSRRPAGGEKKSRGFGRSKAVADVGDGRQTGGKPQVKKAT) are disordered. Positions 51–730 (IGVSDLTLLS…TLFALEAMRD (680 aa)) constitute a Myosin motor domain. Position 144–151 (144–151 (GESGAGKT)) interacts with ATP. A Phosphoserine modification is found at S372. The segment at 419–501 (SIGILDIYGF…PGVFAALNDA (83 aa)) is actin-binding. IQ domains are found at residues 734-754 (HNMA…RTEC) and 755-780 (AIRI…QGHQ). In terms of domain architecture, TH1 spans 788–978 (RRRMSLLGSR…TIHTGPGEPA (191 aa)). Disordered stretches follow at residues 962–1079 (DDSY…PKKP) and 1126–1249 (WTPE…DDDW). The segment covering 1021 to 1035 (AAQPLPRATPQPAEP) has biased composition (pro residues). Over residues 1036–1051 (QPAARAVPQPVAAVAA) the composition is skewed to low complexity. 2 stretches are compositionally biased toward pro residues: residues 1064-1077 (APPP…PAPK) and 1139-1150 (TPKPAPPPPPAA). The region spanning 1076 to 1137 (PKKPTAKVLY…PEAYLEEQVA (62 aa)) is the SH3 domain. Residues 1151–1169 (PRSTPAPATNGAAAAAKAK) are compositionally biased toward low complexity. A compositionally biased stretch (polar residues) spans 1200 to 1221 (VSMNSHDSSGGSGRGTPNSMSN). Residues 1222-1231 (ASLAGGLAEA) are compositionally biased toward low complexity.

It belongs to the TRAFAC class myosin-kinesin ATPase superfamily. Myosin family. Phosphorylation of the TEDS site (Ser-372) is required for the polarization of the actin cytoskeleton. Phosphorylation probably activates the myosin-I ATPase activity.

The protein resides in the cytoplasm. It localises to the cytoskeleton. Its subcellular location is the actin patch. Functionally, type-I myosin implicated in the organization of the actin cytoskeleton. Required for proper actin cytoskeleton polarization. At the cell cortex, assembles in patch-like structures together with proteins from the actin-polymerizing machinery and promotes actin assembly. Functions as actin nucleation-promoting factor (NPF) for the Arp2/3 complex. Plays an important role in polarized growth, spore germination, hyphal morphogenesis, and septal wall formation. This chain is Myosin-1 (myoA), found in Aspergillus fumigatus (strain ATCC MYA-4609 / CBS 101355 / FGSC A1100 / Af293) (Neosartorya fumigata).